A 629-amino-acid chain; its full sequence is Ribosomal protein S6 kinase 2 beta (629 aa).

The 260-residue stretch at 62–321 (FVLLKVLGQG…AEELKRHPFF (260 aa)) folds into the Protein kinase 1 domain. ATP contacts are provided by residues 68–76 (LGQGSFGKV) and lysine 94. Residue aspartate 187 is the Proton acceptor of the active site. Serine 221 bears the Phosphoserine mark. In terms of domain architecture, AGC-kinase C-terminal spans 322-391 (STIDWNKLYR…VAPVLVEEDA (70 aa)). Phosphothreonine is present on threonine 359. Residue serine 363 is modified to Phosphoserine. Serine 380 is subject to Phosphoserine; by autocatalysis. Residues 416–629 (YTVRETIGVG…PEEILARIGS (214 aa)) enclose the Protein kinase 2 domain. Residues 422 to 430 (IGVGSYSVC) and lysine 445 contribute to the ATP site. Aspartate 533 acts as the Proton acceptor in catalysis. Phosphothreonine is present on threonine 571.

Belongs to the protein kinase superfamily. AGC Ser/Thr protein kinase family. S6 kinase subfamily. The cofactor is Mg(2+). Autophosphorylated on Ser-380, as part of the activation process.

It carries out the reaction L-seryl-[protein] + ATP = O-phospho-L-seryl-[protein] + ADP + H(+). It catalyses the reaction L-threonyl-[protein] + ATP = O-phospho-L-threonyl-[protein] + ADP + H(+). With respect to regulation, activated by multiple phosphorylations on threonine and serine residues. In terms of biological role, serine/threonine kinase that may play a role in mediating the growth-factor and stress induced activation of transcription. The polypeptide is Ribosomal protein S6 kinase 2 beta (Xenopus laevis (African clawed frog)).